The following is a 135-amino-acid chain: Salivary protein 15 Iper-1 (135 aa).

The N-terminal stretch at 1–22 (MESFVAMKVVCILFLFVVAAEA) is a signal peptide. Residues Asn-93 and Asn-104 are each glycosylated (N-linked (GlcNAc...) asparagine). The tract at residues 116-135 (GPNKQTCADKSKCVGHIPGC) is CD4-binding.

The protein belongs to the salp15 family. As to quaternary structure, interacts with host CD4. Interacts with host DC-SIGN (CD209). In terms of assembly, (Microbial infection) Interacts with Borrelia outer surface protein C (OspC). In terms of tissue distribution, expressed in salivary glands from feeding female ticks. Highly expressed 4 days after start of feeding.

The protein localises to the secreted. Its function is as follows. Salivary tick protein that downregulates host immune system by binding to both dendritic cells, and CD4(+) T cells. Specifically binds to the CD4 coreceptor on T cells. This interaction prevents the activation of the Src kinase, Lck, and its downstream substrate Zap-70, and results in deficient activation of PLCgamma1, the repression of calcium fluxes triggered by T-cell antigen receptor (TCR) ligation, and a subsequent reduction in interleukin-2 production. This salivary protein also binds to DC-SIGN (CD209) on dendritic cells (DC) and activates the Raf-1 kinase/MEK signaling pathway that results in down-regulating expression of pro-inflammatory cytokines. Furthermore, it inhibits T cell proliferation induced by DCs. It also inhibits in vitro keratinocyte inflammation induced by Borrelia burgdorferi or by the major outer surface protein (OspC) of Borrelia. In addition, it downregulates chemokines and monocyte chemoattractant protein 1, as well as several antimicrobial peptides such as defensins, cathelicidin, psoriasin, and RNase 7. Apart from its immunomodulatory activities, it is also associated with protection of Borrelia spirochetes from antibody-mediated killing through its binding to OspC. In vivo, tests on different immune disease animal models show promising therapeutic results, e.g., in inhibiting HIV infection, experimental autoimmune encephalomyelitis, transplantation rejection, and asthma. Functionally, (Microbial infection) Protects Borrelia garinii from anti-Borrelia antibody-mediated cytotoxicity in vitro. May facilitate B.garinii transmission in mouse model. In terms of biological role, (Microbial infection) Protects Borrelia burgdorferi from anti-Borrelia antibody-mediated cytotoxicity in vitro. (Microbial infection) Protects Borrelia afzelii from anti-Borrelia antibody-mediated cytotoxicity in vitro. In Ixodes persulcatus (Taiga tick), this protein is Salivary protein 15 Iper-1.